The sequence spans 380 residues: Pectin lyase (380 aa).

The signal sequence occupies residues 1-20 (MRSASILSAALAAFAPLASA). N-linked (GlcNAc...) asparagine glycosylation occurs at Asn130.

It belongs to the polysaccharide lyase 1 family.

It is found in the secreted. The enzyme catalyses Eliminative cleavage of (1-&gt;4)-alpha-D-galacturonan methyl ester to give oligosaccharides with 4-deoxy-6-O-methyl-alpha-D-galact-4-enuronosyl groups at their non-reducing ends.. The protein is Pectin lyase (PNLA) of Colletotrichum gloeosporioides (Anthracnose fungus).